Consider the following 505-residue polypeptide: Glutamyl-tRNA(Gln) amidotransferase subunit B, mitochondrial (505 aa).

This sequence belongs to the GatB/GatE family. GatB subfamily. Subunit of the heterotrimeric GatCAB amidotransferase (AdT) complex, composed of A, B and C subunits.

It is found in the mitochondrion. The enzyme catalyses L-glutamyl-tRNA(Gln) + L-glutamine + ATP + H2O = L-glutaminyl-tRNA(Gln) + L-glutamate + ADP + phosphate + H(+). Its function is as follows. Allows the formation of correctly charged Gln-tRNA(Gln) through the transamidation of misacylated Glu-tRNA(Gln) in the mitochondria. The reaction takes place in the presence of glutamine and ATP through an activated gamma-phospho-Glu-tRNA(Gln). The sequence is that of Glutamyl-tRNA(Gln) amidotransferase subunit B, mitochondrial from Schizosaccharomyces japonicus (strain yFS275 / FY16936) (Fission yeast).